The chain runs to 231 residues: MKTLWRWLGRALLAAFALLLLWQVWLFAQVAWWRTHNPDSTSFMRLRLDALQEKKPDARLRHTWVPYEQISIHLKRAVVAAEDDGFVDHEGFDWDGIQRALEKNERKGRPVSGGSTISQQLAKNLFLSPSRSYFRKAQEAVITVMIEQLWSKRRILEVYLNVVEWGNGIFGAEAAARRYYGLPASRLGPAEAARLAVMLPNPRKYERSFGPRLAAHADRIRGRMAWAEVPP.

A helical membrane pass occupies residues 12–32 (LLAAFALLLLWQVWLFAQVAW).

Belongs to the glycosyltransferase 51 family.

The protein resides in the cell inner membrane. It carries out the reaction [GlcNAc-(1-&gt;4)-Mur2Ac(oyl-L-Ala-gamma-D-Glu-L-Lys-D-Ala-D-Ala)](n)-di-trans,octa-cis-undecaprenyl diphosphate + beta-D-GlcNAc-(1-&gt;4)-Mur2Ac(oyl-L-Ala-gamma-D-Glu-L-Lys-D-Ala-D-Ala)-di-trans,octa-cis-undecaprenyl diphosphate = [GlcNAc-(1-&gt;4)-Mur2Ac(oyl-L-Ala-gamma-D-Glu-L-Lys-D-Ala-D-Ala)](n+1)-di-trans,octa-cis-undecaprenyl diphosphate + di-trans,octa-cis-undecaprenyl diphosphate + H(+). It functions in the pathway cell wall biogenesis; peptidoglycan biosynthesis. In terms of biological role, peptidoglycan polymerase that catalyzes glycan chain elongation from lipid-linked precursors. The polypeptide is Biosynthetic peptidoglycan transglycosylase (Azoarcus sp. (strain BH72)).